The following is a 346-amino-acid chain: MDQYCILGRIGEGAHGIVFKAKHVETGEIVALKKVALRRLEDGIPNQALREIKALQEMEDNQYVVQLKAVFPHSAGFVLAFEFMLSDLAEVVRHAQRPLAQAQVKSYLQMLLKGVSFCHANNIVHRDLKPANLLISASGQLKIADFGLARVFSPDGSRLYTHQVATRWYRAPELLYGARQYDQGVDLWAVGCIMGELLNGSPLFPGKNDIEQLCYVLRILGTPNPQVWPELTELPDYNKISFKEQAPVPLEEVLPDASPQALDLLGQFLLYPPRQRIAASKALLHQYFFTAPLPAHPSELPIPQRLGVPAPKAHPGPPRIHDFYVDRPLEESLLNPELIRPFILEG.

In terms of domain architecture, Protein kinase spans 4–288; the sequence is YCILGRIGEG…ASKALLHQYF (285 aa). Residues 10 to 18 and K33 contribute to the ATP site; that span reads IGEGAHGIV. D127 serves as the catalytic Proton acceptor.

The protein belongs to the protein kinase superfamily. CMGC Ser/Thr protein kinase family. CDC2/CDKX subfamily. In terms of assembly, monomer. Interacts with TBC1D32 and MAK.

The protein resides in the nucleus. Its subcellular location is the cytoplasm. It localises to the cell projection. It is found in the cilium. The enzyme catalyses L-seryl-[protein] + ATP = O-phospho-L-seryl-[protein] + ADP + H(+). It carries out the reaction L-threonyl-[protein] + ATP = O-phospho-L-threonyl-[protein] + ADP + H(+). Its function is as follows. Required for high-level Shh responses in the developing neural tube. Together with TBC1D32, controls the structure of the primary cilium by coordinating assembly of the ciliary membrane and axoneme, allowing GLI2 to be properly activated in response to SHH signaling. Involved in cell growth. Activates CDK2, a kinase involved in the control of the cell cycle, by phosphorylating residue 'Thr-160'. The polypeptide is Cyclin-dependent kinase 20 (CDK20) (Pongo abelii (Sumatran orangutan)).